Here is a 274-residue protein sequence, read N- to C-terminus: MRHTLPIAPQFYVTAPQPCPYLEGRMERKLFTSLQGDGVEQLNNSLSQQGFRRSQNVLYRPSCSDCSACMSARISVADFKPTRSQRKTLNRNRHLDRRATSPWATEDQYALFRDYLDQRHADGGMADMDVFEYAAMVEETPIRTRVVEYTDLDTNALTAVSLTDVLEDGLSMVYSFYAPNLPQNSLGTFMVLDHIEIAREAGLPYVYLGYWVPGSQKMGYKAKFSGLEVYFGGEWTPLKDPESFTAEDHPLSTAPVAEQVANIQLPQGTSPKKR.

Belongs to the R-transferase family. Bpt subfamily.

The protein localises to the cytoplasm. It carries out the reaction N-terminal L-glutamyl-[protein] + L-leucyl-tRNA(Leu) = N-terminal L-leucyl-L-glutamyl-[protein] + tRNA(Leu) + H(+). The catalysed reaction is N-terminal L-aspartyl-[protein] + L-leucyl-tRNA(Leu) = N-terminal L-leucyl-L-aspartyl-[protein] + tRNA(Leu) + H(+). Functions in the N-end rule pathway of protein degradation where it conjugates Leu from its aminoacyl-tRNA to the N-termini of proteins containing an N-terminal aspartate or glutamate. The sequence is that of Aspartate/glutamate leucyltransferase from Ruegeria sp. (strain TM1040) (Silicibacter sp.).